We begin with the raw amino-acid sequence, 512 residues long: Maturase K (512 aa).

It belongs to the intron maturase 2 family. MatK subfamily.

Its subcellular location is the plastid. It localises to the chloroplast. Usually encoded in the trnK tRNA gene intron. Probably assists in splicing its own and other chloroplast group II introns. This Lemna minuta (Least duckweed) protein is Maturase K.